The chain runs to 504 residues: Anaerobic nitric oxide reductase transcription regulator NorR (504 aa).

Asp-57 bears the 4-aspartylphosphate mark. The Sigma-54 factor interaction domain maps to 187–416 (MIGLSPGMTQ…LEHAIHRAVV (230 aa)). Residues 215 to 222 (GETGTGKE) and 278 to 287 (ADNGTLFLDE) contribute to the ATP site. A DNA-binding region (H-T-H motif) is located at residues 479 to 498 (WAACARMLETDVANLHRLAK).

Its pathway is nitrogen metabolism; nitric oxide reduction. Its function is as follows. Required for the expression of anaerobic nitric oxide (NO) reductase, acts as a transcriptional activator for at least the norVW operon. Activation also requires sigma-54. In Escherichia coli (strain SE11), this protein is Anaerobic nitric oxide reductase transcription regulator NorR.